Here is a 304-residue protein sequence, read N- to C-terminus: Undecaprenyl-diphosphatase (304 aa).

8 consecutive transmembrane segments (helical) span residues 5–25 (FLFI…EFVP), 47–67 (GFPE…VVVL), 72–92 (ISSS…LKTS), 111–131 (FGIN…LFHD), 137–157 (LFST…LIVI), 209–231 (ISGL…AMVG), 248–268 (TNWI…LVVI), and 283–303 (FAIY…TKVI).

This sequence belongs to the UppP family.

Its subcellular location is the cell membrane. The enzyme catalyses di-trans,octa-cis-undecaprenyl diphosphate + H2O = di-trans,octa-cis-undecaprenyl phosphate + phosphate + H(+). Its function is as follows. Catalyzes the dephosphorylation of undecaprenyl diphosphate (UPP). Confers resistance to bacitracin. The chain is Undecaprenyl-diphosphatase from Clostridium perfringens (strain 13 / Type A).